The sequence spans 362 residues: Meiotic recombination protein SPO11-1 (362 aa).

The Topo IIA-type catalytic domain occupies 8-142; that stretch reads SESTNLLQRI…LNVVSVGNGL (135 aa). Catalysis depends on Tyr-103, which acts as the O-(5'-phospho-DNA)-tyrosine intermediate. Residues Glu-189 and Asp-241 each contribute to the Mg(2+) site.

The protein belongs to the TOP6A family. As to quaternary structure, heterotetramer of 2 SPO11 (SPO11-1 and/or SPO11-2) and 2 MTOPVIB chains. Interacts with MTOPVIB. May form a heterodimer with SPO11-2. Interacts with PRD1. Does not interact with TOP6B. Mg(2+) serves as cofactor. Expressed in shoots, young seedlings, flowers and reproductive tissues. Not found in roots or rosette leaves.

The protein resides in the nucleus. The catalysed reaction is ATP-dependent breakage, passage and rejoining of double-stranded DNA.. Its function is as follows. Component of a topoisomerase 6 complex specifically required for meiotic recombination. Together with MTOPVIB, mediates DNA cleavage that forms the double-strand breaks (DSB) that initiate meiotic recombination. The complex promotes relaxation of negative and positive supercoiled DNA and DNA decatenation through cleavage and ligation cycles. This chain is Meiotic recombination protein SPO11-1, found in Arabidopsis thaliana (Mouse-ear cress).